The chain runs to 594 residues: Chitooligosaccharidolytic beta-N-acetylglucosaminidase (594 aa).

Positions 1–22 (MWSRRIPLFIFGVLVLILSVAA) are cleaved as a signal peptide. 2 cysteine pairs are disulfide-bonded: C31-C59 and C36-C55. N164 carries an N-linked (GlcNAc...) asparagine glycan. Residues D249 and H303 each act as charge relay system in the active site. Cystine bridges form between C316/C373 and C326/C331. E368 acts as the Charge relay system in catalysis. An N-linked (GlcNAc...) asparagine glycan is attached at N375. Disulfide bonds link C478–C491 and C585–C592.

The protein belongs to the glycosyl hydrolase 20 family. In terms of assembly, homodimer.

The catalysed reaction is Hydrolysis of terminal non-reducing N-acetyl-D-hexosamine residues in N-acetyl-beta-D-hexosaminides.. Its activity is regulated as follows. Inhibited by O-(2-acetamido-2-deoxy-D-glucopyransylidene)-amino-N-phenylcarbamate (PUGNAc). Inhibited by thiabendazole (TMG)-chitotriomycin. Inhibited by 6-(dimethylamino)-2-(2-(((5-methyl-1,3,4-thiadiazol-2-yl)methyl)amino)ethyl)- 1H-benzo[de]isoquinoline-1,3(2H)-dione (Q2), a synthesized non-carbohydrate unsymmetrical dyad of naphthalimide and thiadiazole having a dimethylamino group at C4 of the naphthalimide. Inhibited poorly by N-acetyl-glucosamine (NAG)-thiazoline (NGT), but when the thiazoline ring of NGT is replaced by a bulky substituent such as in compound 1,2-dideoxy-2'-methylamino-alpha-D-glucopyranoso-[2,1-d]-Delta2'-thiazoline (NMAGT), the inhibition constant Ki is lowered 600-fold compared to that of NGT. Inhibited by berberine, berberine analogs thalifendine and palmatine, and berberine derivative SYSU-1, but not by berberine analog tetrahydroberberine. Hydrolyzes one beta-GlcNAc unit at a time from the non-reducing ends of substrates, with a preference for shorter substrates. The 2-acetamido group and the beta-glycoside bond linkage in the substrate are required for its activity. Active with p-nitrophenyl (pNP)-beta-GlcNAc, pNP-beta-GalNAc and chitooligosaccharides (degree of polymerization from 2 to 6), but not with the complex N-glycan substrate (GlcNAcbeta-1,2Manalpha-1,6)(GlcNAcbeta-1,2Manalpha-1,3)Manbeta-1,4GlcNAcbeta-1,4GlcNAc-PA (GnGn-PA), pNP-alpha-GlcNAc or with the long polymer colloidal chitin. Involved in chitin catabolism. Involved in the degradation of old cuticle during the pupation stage. This is Chitooligosaccharidolytic beta-N-acetylglucosaminidase from Ostrinia furnacalis (Asian corn borer).